The sequence spans 583 residues: Exonuclease 3'-5' domain-containing protein 2 (583 aa).

Residues 1-11 (MTRESAVATKR) lie on the Mitochondrial intermembrane side of the membrane. A helical membrane pass occupies residues 12-29 (NWAILAAGVGLVYVLVRH). At 30-583 (RHRLLCPLRR…AGLDAKIKET (554 aa)) the chain is on the cytoplasmic side. The 167-residue stretch at 62–228 (TTQWVLNELK…AIYQKLCRDL (167 aa)) folds into the 3'-5' exonuclease domain. Aspartate 83, glutamate 85, and aspartate 213 together coordinate a divalent metal cation. Residues 266 to 281 (GSGVTRSKGSTQSKSN) are compositionally biased toward polar residues. Residues 266 to 286 (GSGVTRSKGSTQSKSNKWVPK) are disordered.

It belongs to the EXD2 family. In terms of assembly, homodimer. Mg(2+) serves as cofactor. Requires Mn(2+) as cofactor.

It localises to the mitochondrion membrane. 3'-5' exoribonuclease required for mitochondrial metabolism. The chain is Exonuclease 3'-5' domain-containing protein 2 from Drosophila melanogaster (Fruit fly).